An 869-amino-acid polypeptide reads, in one-letter code: Aconitate hydratase B (869 aa).

Substrate-binding positions include Arg191, 244 to 246 (SSR), 417 to 419 (QDT), and Ser501. [4Fe-4S] cluster is bound by residues Cys713, Cys772, and Cys775. The substrate site is built by Arg794 and Arg799.

This sequence belongs to the aconitase/IPM isomerase family. As to quaternary structure, monomer. [4Fe-4S] cluster serves as cofactor.

It catalyses the reaction citrate = D-threo-isocitrate. The enzyme catalyses (2S,3R)-3-hydroxybutane-1,2,3-tricarboxylate = 2-methyl-cis-aconitate + H2O. The protein operates within carbohydrate metabolism; tricarboxylic acid cycle; isocitrate from oxaloacetate: step 2/2. It functions in the pathway organic acid metabolism; propanoate degradation. In terms of biological role, involved in the catabolism of short chain fatty acids (SCFA) via the tricarboxylic acid (TCA)(acetyl degradation route) and probably via the 2-methylcitrate cycle I (propionate degradation route). Catalyzes the reversible isomerization of citrate to isocitrate via cis-aconitate. Catalyzes the hydration of 2-methyl-cis-aconitate to yield (2R,3S)-2-methylisocitrate. The apo form of AcnB functions as a RNA-binding regulatory protein. The sequence is that of Aconitate hydratase B (acnB) from Pseudomonas aeruginosa (strain ATCC 15692 / DSM 22644 / CIP 104116 / JCM 14847 / LMG 12228 / 1C / PRS 101 / PAO1).